The primary structure comprises 551 residues: uncharacterized protein (551 aa).

The N-terminal 36 residues, 1–36 (MMALVRDRRAHYVMSIVIRWVHCFSSSLRGTFGTRW), are a transit peptide targeting the mitochondrion. Positions 203–315 (TNILLRKLKE…MDSRDRLREE (113 aa)) form a coiled coil. The disordered stretch occupies residues 354–389 (REASLSPWPKSPPSTTALRPHSATMSVSSAGAQKAK). A compositionally biased stretch (polar residues) spans 366-384 (PSTTALRPHSATMSVSSAG). A coiled-coil region spans residues 405–439 (KHGLESQIEALKANLENEKKKVERFRKEADRLNKS). The disordered stretch occupies residues 519–551 (LQLSPKGKLSESPKEESLEEPSMRQSSPAETVD). The span at 541–551 (MRQSSPAETVD) shows a compositional bias: polar residues.

Interacts with NOD2.

Its subcellular location is the mitochondrion. This is an uncharacterized protein from Homo sapiens (Human).